The following is a 73-amino-acid chain: Neuropeptide-like protein 29 (73 aa).

Residues 1–22 (MISTSSILVLVVLLACFMAASA) form the signal peptide. 5 positions are modified to tyrosine amide: Tyr29, Tyr39, Tyr47, Tyr55, and Tyr63. A Tryptophan amide modification is found at Trp71.

The protein belongs to the YARP (YGGW-amide related peptide) family. In terms of tissue distribution, weakly or not expressed in absence of infection. Upon infection by D.coniospora, it is expressed in hypoderm. Also expressed in perivulval cells when D.coniospora spores adhere to this region. Expressed in hypodermis upon physical injury.

The protein resides in the secreted. Antimicrobial peptides that have antibacterial activity against the Gram-negative bacteria S.marcescens. Has antifungal activity against D.coniospora. May play a role in response to physical injury and osmotic stress. Through the neuropeptide receptor nlp-29, induces sleep upon activation of the innate immune response to molting and injury to the adult epidermis. This Caenorhabditis elegans protein is Neuropeptide-like protein 29.